The primary structure comprises 367 residues: Probable protein phosphatase 2C 67 (367 aa).

The disordered stretch occupies residues 1–79 (MAHQKREATS…DEKAATNSNV (79 aa)). Residues 31–46 (AEKEHILTSDASHETN) show a composition bias toward basic and acidic residues. In terms of domain architecture, PPM-type phosphatase spans 91–365 (EADAAEDKGC…DNCTAVLIVF (275 aa)). D131, G132, D312, and D356 together coordinate Mn(2+).

This sequence belongs to the PP2C family. It depends on Mg(2+) as a cofactor. Requires Mn(2+) as cofactor.

The enzyme catalyses O-phospho-L-seryl-[protein] + H2O = L-seryl-[protein] + phosphate. The catalysed reaction is O-phospho-L-threonyl-[protein] + H2O = L-threonyl-[protein] + phosphate. This Oryza sativa subsp. japonica (Rice) protein is Probable protein phosphatase 2C 67.